A 335-amino-acid polypeptide reads, in one-letter code: tRNA (adenine(58)-N(1))-methyltransferase catalytic subunit TRM61 (335 aa).

S-adenosyl-L-methionine-binding positions include 114-116 (SAS), Glu135, Arg140, 162-163 (DV), and Asp183. Residues 271–281 (VMKKGPSEEPP) are compositionally biased toward basic and acidic residues. A disordered region spans residues 271-302 (VMKKGPSEEPPAKLQKTDNGYKTPKKSTKVKE).

This sequence belongs to the class I-like SAM-binding methyltransferase superfamily. TRM61 family. As to quaternary structure, heterotetramer; composed of two copies of TRM6 and two copies of TRM61.

The protein localises to the nucleus. The enzyme catalyses adenosine(58) in tRNA + S-adenosyl-L-methionine = N(1)-methyladenosine(58) in tRNA + S-adenosyl-L-homocysteine + H(+). Its function is as follows. Catalytic subunit of tRNA (adenine-N(1)-)-methyltransferase, which catalyzes the formation of N(1)-methyladenine at position 58 (m1A58) in initiator methionyl-tRNA. The polypeptide is tRNA (adenine(58)-N(1))-methyltransferase catalytic subunit TRM61 (TRM61) (Candida albicans (strain SC5314 / ATCC MYA-2876) (Yeast)).